The chain runs to 174 residues: Crossover junction endodeoxyribonuclease RuvC (174 aa).

Catalysis depends on residues Asp-8, Glu-68, and Asp-140. Mg(2+) contacts are provided by Asp-8, Glu-68, and Asp-140.

Belongs to the RuvC family. Homodimer which binds Holliday junction (HJ) DNA. The HJ becomes 2-fold symmetrical on binding to RuvC with unstacked arms; it has a different conformation from HJ DNA in complex with RuvA. In the full resolvosome a probable DNA-RuvA(4)-RuvB(12)-RuvC(2) complex forms which resolves the HJ. Requires Mg(2+) as cofactor.

Its subcellular location is the cytoplasm. The enzyme catalyses Endonucleolytic cleavage at a junction such as a reciprocal single-stranded crossover between two homologous DNA duplexes (Holliday junction).. Its function is as follows. The RuvA-RuvB-RuvC complex processes Holliday junction (HJ) DNA during genetic recombination and DNA repair. Endonuclease that resolves HJ intermediates. Cleaves cruciform DNA by making single-stranded nicks across the HJ at symmetrical positions within the homologous arms, yielding a 5'-phosphate and a 3'-hydroxyl group; requires a central core of homology in the junction. The consensus cleavage sequence is 5'-(A/T)TT(C/G)-3'. Cleavage occurs on the 3'-side of the TT dinucleotide at the point of strand exchange. HJ branch migration catalyzed by RuvA-RuvB allows RuvC to scan DNA until it finds its consensus sequence, where it cleaves and resolves the cruciform DNA. The sequence is that of Crossover junction endodeoxyribonuclease RuvC from Legionella pneumophila (strain Lens).